Here is a 524-residue protein sequence, read N- to C-terminus: Bifunctional NAD(P)H-hydrate repair enzyme Nnr (524 aa).

The NAD(P)H-hydrate epimerase stretch occupies residues 1-219; that stretch reads MKVARVSEIK…ISYPRALLED (219 aa). The YjeF N-terminal domain maps to 9–218; that stretch reads IKLLDREAAE…HISYPRALLE (210 aa). The tract at residues 57-61 is NADPHX 1; for epimerase activity; that stretch reads NNGGD. 2 residues coordinate K(+): asparagine 58 and aspartate 128. The interval 132 to 138 is NADPHX 1; for epimerase activity; sequence GTGLSRP. Positions 143 and 161 each coordinate (6S)-NADPHX. Residue serine 164 participates in K(+) binding. Residues 224 to 507 enclose the YjeF C-terminal domain; sequence VETNDPVPLP…NYLPKALRAL (284 aa). The segment at 224-524 is ADP-dependent (S)-NAD(P)H-hydrate dehydratase; that stretch reads VETNDPVPLP…LERYTIKVLP (301 aa). Position 330 (glycine 330) interacts with (6S)-NADPHX. Residues 381–387 form an NADPHX 2; for dehydratase activity region; that stretch reads HAGEMSR. ADP contacts are provided by residues 418–422 and 438–447; these read KGAHT and NPGMATAGSG. Aspartate 448 is a binding site for (6S)-NADPHX.

This sequence in the N-terminal section; belongs to the NnrE/AIBP family. In the C-terminal section; belongs to the NnrD/CARKD family. It depends on K(+) as a cofactor.

The catalysed reaction is (6S)-NADHX + ADP = AMP + phosphate + NADH + H(+). The enzyme catalyses (6S)-NADPHX + ADP = AMP + phosphate + NADPH + H(+). It carries out the reaction (6R)-NADHX = (6S)-NADHX. It catalyses the reaction (6R)-NADPHX = (6S)-NADPHX. Its function is as follows. Bifunctional enzyme that catalyzes the epimerization of the S- and R-forms of NAD(P)HX and the dehydration of the S-form of NAD(P)HX at the expense of ADP, which is converted to AMP. This allows the repair of both epimers of NAD(P)HX, a damaged form of NAD(P)H that is a result of enzymatic or heat-dependent hydration. The sequence is that of Bifunctional NAD(P)H-hydrate repair enzyme Nnr (nnr) from Thermofilum pendens (strain DSM 2475 / Hrk 5).